The primary structure comprises 358 residues: Ornithine cyclodeaminase (358 aa).

L-ornithine contacts are provided by Arg-52 and Lys-76. NAD(+)-binding positions include Thr-91, Arg-119, 146–147, Asp-168, Thr-208, 231–234, Lys-238, and Ser-299; these read AQ and VGGD. Arg-119 contributes to the L-ornithine binding site. Asp-234 provides a ligand contact to L-ornithine. Asp-234 serves as the catalytic Proton donor/acceptor. Val-300 serves as a coordination point for L-ornithine.

The protein belongs to the ornithine cyclodeaminase/mu-crystallin family. The cofactor is NAD(+).

The catalysed reaction is L-ornithine = L-proline + NH4(+). Its pathway is amino-acid biosynthesis; L-proline biosynthesis; L-proline from L-ornithine: step 1/1. Catalyzes the conversion of L-ornithine into L-proline with release of ammonia. The sequence is that of Ornithine cyclodeaminase from Brucella suis biovar 1 (strain 1330).